A 639-amino-acid chain; its full sequence is Chaperone protein DnaK (639 aa).

Thr-198 carries the phosphothreonine; by autocatalysis modification. Over residues 603–618 (AKAQTQGGAQEGAAKQ) the composition is skewed to low complexity. A disordered region spans residues 603–639 (AKAQTQGGAQEGAAKQSNATADDVVDAEFEEVKDDKK). The span at 625–639 (DVVDAEFEEVKDDKK) shows a compositional bias: acidic residues.

Belongs to the heat shock protein 70 family.

Its function is as follows. Acts as a chaperone. The chain is Chaperone protein DnaK from Shewanella oneidensis (strain ATCC 700550 / JCM 31522 / CIP 106686 / LMG 19005 / NCIMB 14063 / MR-1).